A 609-amino-acid polypeptide reads, in one-letter code: UvrABC system protein C (609 aa).

The GIY-YIG domain maps to 16–94 (SSAGVYRMYD…IKQYMPKYNV (79 aa)). The UVR domain maps to 203 to 238 (QQVISALVDKMELAAERQAYEQAARFRDQIMALRKV).

Belongs to the UvrC family. In terms of assembly, interacts with UvrB in an incision complex.

The protein localises to the cytoplasm. In terms of biological role, the UvrABC repair system catalyzes the recognition and processing of DNA lesions. UvrC both incises the 5' and 3' sides of the lesion. The N-terminal half is responsible for the 3' incision and the C-terminal half is responsible for the 5' incision. The polypeptide is UvrABC system protein C (Shewanella baltica (strain OS155 / ATCC BAA-1091)).